The sequence spans 877 residues: MADDGMLMNFEIGEVPIVTKQSFKGGRWKDRLAAKKTAQHRVSRSTSKPSTREIFSERQHDTGAEEYIGREPSLRAPKRQRVDDNYDSYGGRNESTAAYASGKLPSGSINLGRGRKTTFQEETRPAFVAGKLPPGSINISGKKATPIQEETRPAFVSGKLPPGSINSGARKAISFQEEKKPAYISGKLPHGSIDGMRNREMAAVHREIAEGGRKPGQVVSSLFTFNPTSKKKFDEPEEESEPAKPSNAPLTEEMATFTNLGLSRRLAAHLSTKLDMKAPTAIQKASVTQLISDDSDAFIQAETGSGKTLAYLLPIVERILALSDNGIQIHRDSGLFAIILSPTRELCKQIAAVLEKVLRCAPWIVGTTVNGGESKQSEKARLRKGVNILVATPGRLADHLDNTEVLNVATVRWLVLDEGDRLMELGFEEEIKGIVEKIGRRSVASGSSEMMSLPKRRVTILCSATMKMNVQRLGEISLKDAVHIQADPSEQEKQDKANGIEADDKAFSAPTQLKQSYAIVPAKLRLVTLTALLKRAFARKGSVMKAIVFMSCADSVDFHFSLFSRSAEKSAEASEEGKVDPPTLPKSELIKETITHGATISNNSNPVILHKLHGSLAQNIRTATLKAYSESADPCVLICTDVASRGLDLPNVDFVIEYDPPFSAEDHLHRVGRTARAGREGRALIFLMPGTEEEYVSILASGYREGRKALTHHTAEDLIQKGFGGTGREWEERATNFQLEVERWSLDSPRYLEMARRGFQSHIRAYATHVANERHIFNMQELHLGHLAKAFALRDKPGSIKVPGLRPAKMTKADRSVAARKAKRGEKEEEKAPEGERVRKQRKMELDLPTVDSNEVAARMKRKMKEHMSAASEFNIG.

2 disordered regions span residues 34-163 (AKKT…LPPG) and 225-251 (FNPT…APLT). Over residues 50–73 (STREIFSERQHDTGAEEYIGREPS) the composition is skewed to basic and acidic residues. The Q motif signature appears at 255-284 (ATFTNLGLSRRLAAHLSTKLDMKAPTAIQK). Positions 288–484 (TQLISDDSDA…EISLKDAVHI (197 aa)) constitute a Helicase ATP-binding domain. 301 to 308 (AETGSGKT) is an ATP binding site. The DEAD box motif lies at 417-420 (DEGD). In terms of domain architecture, Helicase C-terminal spans 512–719 (QLKQSYAIVP…LTHHTAEDLI (208 aa)). Residues 803-851 (PGLRPAKMTKADRSVAARKAKRGEKEEEKAPEGERVRKQRKMELDLPTV) form a disordered region. Over residues 825-846 (GEKEEEKAPEGERVRKQRKMEL) the composition is skewed to basic and acidic residues.

It belongs to the DEAD box helicase family. DDX31/DBP7 subfamily.

It is found in the nucleus. It localises to the nucleolus. The enzyme catalyses ATP + H2O = ADP + phosphate + H(+). Functionally, ATP-binding RNA helicase involved in the biogenesis of 60S ribosomal subunits and is required for the normal formation of 25S and 5.8S rRNAs. The polypeptide is ATP-dependent RNA helicase dbp7 (dbp7) (Sclerotinia sclerotiorum (strain ATCC 18683 / 1980 / Ss-1) (White mold)).